We begin with the raw amino-acid sequence, 267 residues long: Acyl-[acyl-carrier-protein]--UDP-N-acetylglucosamine O-acyltransferase (267 aa).

The protein belongs to the transferase hexapeptide repeat family. LpxA subfamily. As to quaternary structure, homotrimer.

The protein resides in the cytoplasm. The catalysed reaction is a (3R)-hydroxyacyl-[ACP] + UDP-N-acetyl-alpha-D-glucosamine = a UDP-3-O-[(3R)-3-hydroxyacyl]-N-acetyl-alpha-D-glucosamine + holo-[ACP]. The protein operates within glycolipid biosynthesis; lipid IV(A) biosynthesis; lipid IV(A) from (3R)-3-hydroxytetradecanoyl-[acyl-carrier-protein] and UDP-N-acetyl-alpha-D-glucosamine: step 1/6. Its function is as follows. Involved in the biosynthesis of lipid A, a phosphorylated glycolipid that anchors the lipopolysaccharide to the outer membrane of the cell. In Cupriavidus necator (strain ATCC 17699 / DSM 428 / KCTC 22496 / NCIMB 10442 / H16 / Stanier 337) (Ralstonia eutropha), this protein is Acyl-[acyl-carrier-protein]--UDP-N-acetylglucosamine O-acyltransferase.